Reading from the N-terminus, the 412-residue chain is Probable ribonuclease FAU-1 (412 aa).

The protein belongs to the FAU-1 family.

Its function is as follows. Probable RNase involved in rRNA stability through maturation and/or degradation of precursor rRNAs. Binds to RNA in loop regions with AU-rich sequences. This Sulfurisphaera tokodaii (strain DSM 16993 / JCM 10545 / NBRC 100140 / 7) (Sulfolobus tokodaii) protein is Probable ribonuclease FAU-1.